Reading from the N-terminus, the 439-residue chain is Xylose isomerase (439 aa).

Residues H103 and D106 contribute to the active site. Positions 234, 270, 273, 298, 309, 311, and 341 each coordinate Mg(2+).

The protein belongs to the xylose isomerase family. As to quaternary structure, homotetramer. Requires Mg(2+) as cofactor.

Its subcellular location is the cytoplasm. It catalyses the reaction alpha-D-xylose = alpha-D-xylulofuranose. In Bacteroides fragilis (strain ATCC 25285 / DSM 2151 / CCUG 4856 / JCM 11019 / LMG 10263 / NCTC 9343 / Onslow / VPI 2553 / EN-2), this protein is Xylose isomerase.